The sequence spans 335 residues: MKKKIFAGAVTLLSVAVLAACSNSEGKDIVTMKGNTITVNEFYDQVKNNGAAQQVLLQMAIKDIFEEKYGKDVKDKDVKDAFEKSKTAYGTAFAQVLAQNGLTEDAYKEQIRTNMLVEYAVKKAAEKELTDENYKSAFENYTPEVTAQIIKVDSEDKGKEVLEKAKAEGADFSQIAKENSTDAATKEKGGEIKFDSGSTDVPDAVKKAAFALEENGVSDLVTVPDSQYSASYYIVKLVKKSEKSSNWKDYKDKLKKIIIAQKEKDTSFIQSVVAKELKDANIKVKDSAFQSVFAQYIETTGSSTSSSSAASSSKTSESSSAAESSSKEASSSAAE.

Positions 1 to 20 (MKKKIFAGAVTLLSVAVLAA) are cleaved as a signal peptide. The N-palmitoyl cysteine moiety is linked to residue cysteine 21. Cysteine 21 carries the S-diacylglycerol cysteine lipid modification. A PpiC domain is found at 142–239 (TPEVTAQIIK…ASYYIVKLVK (98 aa)). The interval 300 to 335 (TGSSTSSSSAASSSKTSESSSAAESSSKEASSSAAE) is disordered. A compositionally biased stretch (low complexity) spans 302–335 (SSTSSSSAASSSKTSESSSAAESSSKEASSSAAE).

It belongs to the PrsA family.

Its subcellular location is the cell membrane. The enzyme catalyses [protein]-peptidylproline (omega=180) = [protein]-peptidylproline (omega=0). Functionally, plays a major role in protein secretion by helping the post-translocational extracellular folding of several secreted proteins. The polypeptide is Foldase protein PrsA (Streptococcus sanguinis (strain SK36)).